An 883-amino-acid chain; its full sequence is Phosphoenolpyruvate carboxylase (883 aa).

Catalysis depends on residues His-138 and Lys-546.

This sequence belongs to the PEPCase type 1 family. It depends on Mg(2+) as a cofactor.

The enzyme catalyses oxaloacetate + phosphate = phosphoenolpyruvate + hydrogencarbonate. Forms oxaloacetate, a four-carbon dicarboxylic acid source for the tricarboxylic acid cycle. The protein is Phosphoenolpyruvate carboxylase of Escherichia fergusonii (strain ATCC 35469 / DSM 13698 / CCUG 18766 / IAM 14443 / JCM 21226 / LMG 7866 / NBRC 102419 / NCTC 12128 / CDC 0568-73).